The following is a 201-amino-acid chain: Phospholipase A2 inhibitor PIP (201 aa).

A signal peptide spans 1–19; the sequence is MKSLQTICLLFIFIARGTS. 8 disulfides stabilise this stretch: cysteine 22–cysteine 46, cysteine 25–cysteine 32, cysteine 39–cysteine 67, cysteine 73–cysteine 94, cysteine 95–cysteine 100, cysteine 118–cysteine 143, cysteine 136–cysteine 165, and cysteine 169–cysteine 191. N-linked (GlcNAc...) asparagine glycosylation is present at asparagine 157.

Homohexamer. Glycosylated. Expressed by the liver.

Its subcellular location is the secreted. Inhibits the enzymatic activity of phospholipase A2 (PA2). Binds to the major PLA2 toxin of D.russelli siamensis (Daboiatoxin, AC Q7T2R1, and AC Q7T3T5) at 1-2-fold molar excess of inhibitor to toxin. It exhibits broad spectra in neutralizing the toxicity of various snake venoms and toxins and inhibits the formation of edema in mice. May bind to PLA2 through its proline-rich hydrophobic core region. The chain is Phospholipase A2 inhibitor PIP from Malayopython reticulatus (Reticulate python).